The sequence spans 332 residues: Formamidase (332 aa).

The region spanning 14-259 (FLTALIQYPV…WEIVTAEVYP (246 aa)) is the CN hydrolase domain. The Proton acceptor role is filled by Glu60. The active-site Proton donor is the Lys132. The active-site Nucleophile is Cys165.

The protein belongs to the carbon-nitrogen hydrolase superfamily. Aliphatic amidase family.

It carries out the reaction formamide + H2O = formate + NH4(+). Is an aliphatic amidase with a restricted substrate specificity, as it only hydrolyzes formamide. In Bacillus cereus (strain B4264), this protein is Formamidase.